The following is a 487-amino-acid chain: N-succinylglutamate 5-semialdehyde dehydrogenase (487 aa).

221-226 (GSSDTG) provides a ligand contact to NAD(+). Catalysis depends on residues E244 and C278.

The protein belongs to the aldehyde dehydrogenase family. AstD subfamily.

The enzyme catalyses N-succinyl-L-glutamate 5-semialdehyde + NAD(+) + H2O = N-succinyl-L-glutamate + NADH + 2 H(+). The protein operates within amino-acid degradation; L-arginine degradation via AST pathway; L-glutamate and succinate from L-arginine: step 4/5. Its function is as follows. Catalyzes the NAD-dependent reduction of succinylglutamate semialdehyde into succinylglutamate. This chain is N-succinylglutamate 5-semialdehyde dehydrogenase, found in Burkholderia ambifaria (strain ATCC BAA-244 / DSM 16087 / CCUG 44356 / LMG 19182 / AMMD) (Burkholderia cepacia (strain AMMD)).